Reading from the N-terminus, the 302-residue chain is Recombination-associated protein RdgC (302 aa).

It belongs to the RdgC family.

The protein localises to the cytoplasm. It is found in the nucleoid. Its function is as follows. May be involved in recombination. This chain is Recombination-associated protein RdgC, found in Actinobacillus pleuropneumoniae serotype 7 (strain AP76).